A 375-amino-acid chain; its full sequence is Patatin-1-Kuras 2 (375 aa).

A signal peptide spans 1-11; it reads MILATTSSTFA. A PNPLA domain is found at 20-218; that stretch reads LSIDGGGIKG…TVADPALLSV (199 aa). The GXGXXG signature appears at 24–29; it reads GGGIKG. Residues 63–67 carry the GXSXG motif; the sequence is GTSTG. Residue Ser-65 is the Nucleophile of the active site. Asn-103 is a glycosylation site (N-linked (GlcNAc...) asparagine). Asp-204 (proton acceptor) is an active-site residue. The DGA/G motif lies at 204–206; that stretch reads DGA. The stretch at 349 to 373 forms a coiled coil; the sequence is ETYEEALKRFAKLLSDRKKLRANKA.

Belongs to the patatin family. In terms of tissue distribution, tuber.

It is found in the vacuole. In terms of biological role, probable lipolytic acyl hydrolase (LAH), an activity which is thought to be involved in the response of tubers to pathogens. In Solanum tuberosum (Potato), this protein is Patatin-1-Kuras 2 (pat1-k2).